We begin with the raw amino-acid sequence, 300 residues long: Probable membrane transporter protein YtnM (300 aa).

Helical transmembrane passes span 4 to 24 (LIVF…LGMA), 33 to 53 (LLAF…AEVV), 76 to 96 (LVIP…QLPG), 102 to 122 (YISL…LFQY), 139 to 159 (IPLG…WGPV), 206 to 226 (LWVF…AWLV), 231 to 251 (PQLM…RTLI), and 260 to 280 (VHPL…LFVL).

It belongs to the 4-toluene sulfonate uptake permease (TSUP) (TC 2.A.102) family.

Its subcellular location is the cell membrane. The protein is Probable membrane transporter protein YtnM (ytnM) of Bacillus subtilis (strain 168).